A 336-amino-acid polypeptide reads, in one-letter code: DNA-directed RNA polymerase subunit alpha (336 aa).

Positions 1–226 (MLIAQRPTLS…ELFGLARELN (226 aa)) are alpha N-terminal domain (alpha-NTD). The alpha C-terminal domain (alpha-CTD) stretch occupies residues 241-336 (AALAADMALP…DDAAFSDDEL (96 aa)).

The protein belongs to the RNA polymerase alpha chain family. In terms of assembly, homodimer. The RNAP catalytic core consists of 2 alpha, 1 beta, 1 beta' and 1 omega subunit. When a sigma factor is associated with the core the holoenzyme is formed, which can initiate transcription.

The catalysed reaction is RNA(n) + a ribonucleoside 5'-triphosphate = RNA(n+1) + diphosphate. Its function is as follows. DNA-dependent RNA polymerase catalyzes the transcription of DNA into RNA using the four ribonucleoside triphosphates as substrates. The polypeptide is DNA-directed RNA polymerase subunit alpha (Arthrobacter sp. (strain FB24)).